The sequence spans 194 residues: WASH complex subunit 3 (194 aa).

An N-acetylmethionine modification is found at methionine 1. Residues 46-74 (AVCEEKLADLSLRIQQIETTLNILDAKLS) adopt a coiled-coil conformation. Disordered stretches follow at residues 94-126 (VTNG…PSEN) and 158-194 (SEGL…SFSD). Over residues 98 to 113 (SHSETTSEQTQQNSTQ) the composition is skewed to low complexity. The span at 114-126 (DSGAQESEAPSEN) shows a compositional bias: polar residues.

The protein belongs to the CCDC53 family. In terms of assembly, component of the WASH core complex also described as WASH regulatory complex (SHRC) composed of WASHC1, WASHC2, WASHC3, WASHC4 and WASHC5. The WASH core complex associates via WASHC2 with the F-actin-capping protein dimer (formed by CAPZA1, CAPZA2 or CAPZA3 and CAPZB) in a transient or substoichiometric manner which was initially described as WASH complex.

It localises to the early endosome. Its function is as follows. Acts as a component of the WASH core complex that functions as a nucleation-promoting factor (NPF) at the surface of endosomes, where it recruits and activates the Arp2/3 complex to induce actin polymerization, playing a key role in the fission of tubules that serve as transport intermediates during endosome sortingg. The polypeptide is WASH complex subunit 3 (Mus musculus (Mouse)).